The primary structure comprises 210 residues: Glutathione S-transferase P (210 aa).

A GST N-terminal domain is found at proline 2 to glycine 81. At tyrosine 4 the chain carries Phosphotyrosine; by EGFR. Residues tyrosine 8, arginine 14, tryptophan 39, lysine 45, and glutamine 52 to leucine 53 contribute to the glutathione site. The residue at position 62 (threonine 62) is a Phosphothreonine. Glutamine 65–serine 66 contributes to the glutathione binding site. A GST C-terminal domain is found at aspartate 83–isoleucine 204. 2 positions are modified to N6-succinyllysine: lysine 103 and lysine 116. Lysine 128 carries the post-translational modification N6-acetyllysine.

Belongs to the GST superfamily. Pi family. Homodimer. Interacts with CDK5.

It is found in the cytoplasm. The protein resides in the mitochondrion. It localises to the nucleus. It carries out the reaction RX + glutathione = an S-substituted glutathione + a halide anion + H(+). The catalysed reaction is prostaglandin J2 + glutathione = prostaglandin J2-S-(R)-glutathione. The enzyme catalyses prostaglandin J2 + glutathione = prostaglandin J2-S-(S)-glutathione. It catalyses the reaction prostaglandin A2 + glutathione = prostaglandin A2-S-(S)-glutathione. It carries out the reaction 11(S)-hydroxy-14(S),15(S)-epoxy-(5Z,8Z,12E)-eicosatrienoate + glutathione = (11S,15S)-dihydroxy-14(R)-S-glutathionyl-(5Z,8Z,12E)-eicosatrienoate. Its function is as follows. Conjugation of reduced glutathione to a wide number of exogenous and endogenous hydrophobic electrophiles. Involved in the formation of glutathione conjugates of both prostaglandin A2 (PGA2) and prostaglandin J2 (PGJ2). Participates in the formation of novel hepoxilin regioisomers. Negatively regulates CDK5 activity via p25/p35 translocation to prevent neurodegeneration. The polypeptide is Glutathione S-transferase P (GSTP1) (Pongo abelii (Sumatran orangutan)).